The following is a 493-amino-acid chain: Glutamyl-tRNA(Gln) amidotransferase subunit A (493 aa).

Residues Lys78 and Ser158 each act as charge relay system in the active site. Ser182 functions as the Acyl-ester intermediate in the catalytic mechanism.

The protein belongs to the amidase family. GatA subfamily. As to quaternary structure, heterotrimer of A, B and C subunits.

The enzyme catalyses L-glutamyl-tRNA(Gln) + L-glutamine + ATP + H2O = L-glutaminyl-tRNA(Gln) + L-glutamate + ADP + phosphate + H(+). Allows the formation of correctly charged Gln-tRNA(Gln) through the transamidation of misacylated Glu-tRNA(Gln) in organisms which lack glutaminyl-tRNA synthetase. The reaction takes place in the presence of glutamine and ATP through an activated gamma-phospho-Glu-tRNA(Gln). The sequence is that of Glutamyl-tRNA(Gln) amidotransferase subunit A from Azorhizobium caulinodans (strain ATCC 43989 / DSM 5975 / JCM 20966 / LMG 6465 / NBRC 14845 / NCIMB 13405 / ORS 571).